The following is a 142-amino-acid chain: Small ribosomal subunit protein uS11 (142 aa).

Positions 1–21 are disordered; the sequence is MPPKTRGAVRKPRRKDKKNIA. The segment covering 7–17 has biased composition (basic residues); it reads GAVRKPRRKDK.

It belongs to the universal ribosomal protein uS11 family. In terms of assembly, part of the 30S ribosomal subunit. Interacts with proteins S7 and S18. Binds to IF-3.

Functionally, located on the platform of the 30S subunit, it bridges several disparate RNA helices of the 16S rRNA. Forms part of the Shine-Dalgarno cleft in the 70S ribosome. This is Small ribosomal subunit protein uS11 from Paenarthrobacter aurescens (strain TC1).